The chain runs to 520 residues: Nonsense-mediated mRNA decay factor SMG9 (520 aa).

3 disordered regions span residues Met1 to Leu94, Lys108 to Thr143, and Lys341 to Gly360. Position 2 is an N-acetylserine (Ser2). A phosphoserine mark is found at Ser2, Ser4, Ser7, Ser32, and Ser53. Residues Gly36 to Ser53 are compositionally biased toward basic and acidic residues. 2 stretches are compositionally biased toward pro residues: residues Gln78–Leu94 and Thr122–Pro133. Residues Pro342–Ser357 show a composition bias toward low complexity. At Ser451 the chain carries Phosphoserine.

The protein belongs to the SMG9 family. Self-associates to form homodimers and forms heterodimers with SMG8; these assembly forms may represent SMG1C intermediate forms. Component of the SMG1C complex composed of SMG1, SMG8 and SMG9. Interacts with DHX34; the interaction is RNA-independent. In terms of processing, phosphorylated by SMG1.

Functionally, involved in nonsense-mediated decay (NMD) of mRNAs containing premature stop codons. Is recruited by release factors to stalled ribosomes together with SMG1 and SMG8 (forming the SMG1C protein kinase complex) and, in the SMG1C complex, is required for the efficient association between SMG1 and SMG8. Plays a role in brain, heart, and eye development. The chain is Nonsense-mediated mRNA decay factor SMG9 from Homo sapiens (Human).